Here is a 487-residue protein sequence, read N- to C-terminus: Cyclic AMP-dependent transcription factor ATF-2 (487 aa).

The segment at 7–31 adopts a C2H2-type zinc-finger fold; the sequence is FLCTAPGCGQRFTNEDHLAVHKHKH. Disordered stretches follow at residues 106–132 and 267–354; these read EEPS…DEKE and QHPQ…CRQK. Residues 298–319 show a composition bias toward low complexity; that stretch reads QQPATSTTETPASPAQPTQQTP. The segment covering 328–345 has biased composition (basic and acidic residues); the sequence is AANEDPDEKRRKFLERNR. A bZIP domain is found at 334–397; the sequence is DEKRRKFLER…AQLKQLLLAH (64 aa). The basic motif stretch occupies residues 336-356; the sequence is KRRKFLERNRAAASRCRQKRK. The interval 362 to 390 is leucine-zipper; sequence LEKKAEDLSSLNGQLQNEVTLLRNEVAQL. A Nuclear export signal motif is present at residues 387-396; the sequence is VAQLKQLLLA. The tract at residues 407 to 487 is disordered; it reads KKSGYHTADK…PPSQAQPSGS (81 aa). Positions 425–436 are enriched in polar residues; sequence VPSSPHTEAIQH. The span at 437-449 shows a compositional bias: low complexity; that stretch reads SSVSTSNGVSSTS. Over residues 457–468 the composition is skewed to polar residues; that stretch reads SVLTQLADQSSE.

The protein belongs to the bZIP family. ATF subfamily. Binds DNA as a dimer and can form a homodimer in the absence of DNA. Can form a heterodimer with JUN. Heterodimerization is essential for its transcriptional activity.

It localises to the nucleus. The protein localises to the cytoplasm. The protein resides in the mitochondrion outer membrane. Functionally, transcriptional activator which regulates the transcription of various genes, including those involved in anti-apoptosis, cell growth, and DNA damage response. Dependent on its binding partner, binds to CRE (cAMP response element) consensus sequences (5'-TGACGTCA-3') or to AP-1 (activator protein 1) consensus sequences (5'-TGACTCA-3'). In Gallus gallus (Chicken), this protein is Cyclic AMP-dependent transcription factor ATF-2 (ATF2).